The sequence spans 464 residues: Probable LL-diaminopimelate aminotransferase, chloroplastic (464 aa).

The transit peptide at 1–39 (MAASPAAGAAAATVSSFVSPSSFSSVKASKPDRLRPARR) directs the protein to the chloroplast. Glycine 102 serves as a coordination point for substrate. Tyrosine 132 lines the pyridoxal 5'-phosphate pocket. Positions 135, 167, 190, and 247 each coordinate substrate. Pyridoxal 5'-phosphate is bound by residues asparagine 247, aspartate 275, tyrosine 278, serine 305, and serine 307. Position 308 is an N6-(pyridoxal phosphate)lysine (lysine 308). Position 316 (arginine 316) interacts with pyridoxal 5'-phosphate. 2 residues coordinate substrate: asparagine 347 and arginine 442.

This sequence belongs to the class-I pyridoxal-phosphate-dependent aminotransferase family. LL-diaminopimelate aminotransferase subfamily. In terms of assembly, homodimer. The cofactor is pyridoxal 5'-phosphate.

It localises to the plastid. The protein resides in the chloroplast. It carries out the reaction (2S,6S)-2,6-diaminopimelate + 2-oxoglutarate = (S)-2,3,4,5-tetrahydrodipicolinate + L-glutamate + H2O + H(+). It functions in the pathway amino-acid biosynthesis; L-lysine biosynthesis via DAP pathway; LL-2,6-diaminopimelate from (S)-tetrahydrodipicolinate (aminotransferase route): step 1/1. In terms of biological role, required for lysine biosynthesis. Catalyzes the direct conversion of tetrahydrodipicolinate to LL-diaminopimelate, a reaction that requires three enzymes in E.coli. The sequence is that of Probable LL-diaminopimelate aminotransferase, chloroplastic (AGD2) from Oryza sativa subsp. japonica (Rice).